A 603-amino-acid polypeptide reads, in one-letter code: Rab proteins geranylgeranyltransferase component A (603 aa).

S470 carries the post-translational modification Phosphoserine.

This sequence belongs to the Rab GDI family.

Functionally, substrate-binding subunit (component A) of the Rab geranylgeranyltransferase (GGTase) complex. Binds unprenylated Rab proteins and presents the substrate peptide to the catalytic component B. The component A is thought to be regenerated by transferring its prenylated Rab back to the donor membrane. This chain is Rab proteins geranylgeranyltransferase component A (MRS6), found in Saccharomyces cerevisiae (strain ATCC 204508 / S288c) (Baker's yeast).